Consider the following 221-residue polypeptide: Transmembrane emp24 domain-containing protein 3 (221 aa).

Residues methionine 1–glycine 30 form the signal peptide. The Lumenal segment spans residues alanine 31 to serine 184. One can recognise a GOLD domain in the interval lysine 42–valine 124. Arginine 103 carries the dimethylated arginine modification. The chain crosses the membrane as a helical span at residues tyrosine 185–leucine 205. The Cytoplasmic segment spans residues lysine 206 to serine 221. A COPII vesicle coat-binding motif is present at residues phenylalanine 208–phenylalanine 209. Positions phenylalanine 208–serine 221 match the COPI vesicle coat-binding motif.

The protein belongs to the EMP24/GP25L family. Monomer in endoplasmic reticulum, endoplasmic reticulum-Golgi intermediate compartment and cis-Golgi network. Interacts (via C-terminus) with COPG1; the interaction involves dimeric TMED3; however, there are conflicting reports on the interaction. Interacts with GORASP1 and GORASP2.

The protein resides in the endoplasmic reticulum-Golgi intermediate compartment membrane. It localises to the golgi apparatus. Its subcellular location is the cis-Golgi network membrane. The protein localises to the golgi stack membrane. It is found in the endoplasmic reticulum membrane. The protein resides in the cytoplasmic vesicle. It localises to the COPI-coated vesicle membrane. Its function is as follows. Potential role in vesicular protein trafficking, mainly in the early secretory pathway. Contributes to the coupled localization of TMED2 and TMED10 in the cis-Golgi network. This chain is Transmembrane emp24 domain-containing protein 3 (Tmed3), found in Rattus norvegicus (Rat).